The following is a 513-amino-acid chain: ATP synthase subunit alpha (513 aa).

169-176 (GDRQTGKT) contacts ATP.

It belongs to the ATPase alpha/beta chains family. F-type ATPases have 2 components, CF(1) - the catalytic core - and CF(0) - the membrane proton channel. CF(1) has five subunits: alpha(3), beta(3), gamma(1), delta(1), epsilon(1). CF(0) has three main subunits: a(1), b(2) and c(9-12). The alpha and beta chains form an alternating ring which encloses part of the gamma chain. CF(1) is attached to CF(0) by a central stalk formed by the gamma and epsilon chains, while a peripheral stalk is formed by the delta and b chains.

It is found in the cell inner membrane. It carries out the reaction ATP + H2O + 4 H(+)(in) = ADP + phosphate + 5 H(+)(out). Produces ATP from ADP in the presence of a proton gradient across the membrane. The alpha chain is a regulatory subunit. The chain is ATP synthase subunit alpha from Cronobacter sakazakii (strain ATCC BAA-894) (Enterobacter sakazakii).